Consider the following 365-residue polypeptide: tRNA/tmRNA (uracil-C(5))-methyltransferase (365 aa).

5 residues coordinate S-adenosyl-L-methionine: Q189, Y217, N222, E238, and D298. The active-site Nucleophile is the C323. E357 (proton acceptor) is an active-site residue.

This sequence belongs to the class I-like SAM-binding methyltransferase superfamily. RNA M5U methyltransferase family. TrmA subfamily.

The enzyme catalyses uridine(54) in tRNA + S-adenosyl-L-methionine = 5-methyluridine(54) in tRNA + S-adenosyl-L-homocysteine + H(+). It carries out the reaction uridine(341) in tmRNA + S-adenosyl-L-methionine = 5-methyluridine(341) in tmRNA + S-adenosyl-L-homocysteine + H(+). Functionally, dual-specificity methyltransferase that catalyzes the formation of 5-methyluridine at position 54 (m5U54) in all tRNAs, and that of position 341 (m5U341) in tmRNA (transfer-mRNA). The sequence is that of tRNA/tmRNA (uracil-C(5))-methyltransferase from Shewanella frigidimarina (strain NCIMB 400).